Consider the following 195-residue polypeptide: Protease (195 aa).

The 79-residue stretch at 71–149 (ALMLVDTGAE…DKWQILGRDV (79 aa)) folds into the Peptidase A2 domain. Asp-76 is a catalytic residue.

This is Protease from Bos taurus (Bovine).